We begin with the raw amino-acid sequence, 359 residues long: S-geranylgeranyl-glutathione receptor P2RY8 (359 aa).

Over 1-19 (MQVPNSTGPDNATLQMLRN) the chain is Extracellular. N-linked (GlcNAc...) asparagine glycosylation is found at N5 and N11. A helical transmembrane segment spans residues 20-40 (PAIAVALPVVYSLVAAVSIPG). The Cytoplasmic portion of the chain corresponds to 41–57 (NLFSLWVLCRRMGPRSP). A helical membrane pass occupies residues 58–78 (SVIFMINLSVTDLMLASVLPF). Topologically, residues 79 to 88 (QIYYHCNRHH) are extracellular. A helical transmembrane segment spans residues 89–109 (WVFGVLLCNVVTVAFYANMYS). Over 110 to 138 (SILTMTCISVERFLGVLYPLSSKRWRRRR) the chain is Cytoplasmic. Residues 139-159 (YAVAACAGTWLLLLTALSPLA) traverse the membrane as a helical segment. The Extracellular portion of the chain corresponds to 160 to 187 (RTDLTYPVHALGIITCFDVLKWTMLPSV). A helical transmembrane segment spans residues 188-208 (AMWAVFLFTIFILLFLIPFVI). Topologically, residues 209 to 237 (TVACYTATILKLLRTEEAHGREQRRRAVG) are cytoplasmic. The chain crosses the membrane as a helical span at residues 238–258 (LAAVVLLAFVTCFAPNNFVLL). At 259–275 (AHIVSRLFYGKSYYHVY) the chain is on the extracellular side. The helical transmembrane segment at 276–296 (KLTLCLSCLNNCLDPFVYYFA) threads the bilayer. Topologically, residues 297–359 (SREFQLRLRE…PGLQRQESVF (63 aa)) are cytoplasmic. A disordered region spans residues 329–359 (RTTSVRSEAGAHPEGMEGATRPGLQRQESVF).

It belongs to the G-protein coupled receptor 1 family. In terms of tissue distribution, barely detectable in normal blood leukocytes. Weaker expression was seen in heart, kidney and lung. Not detected in brain. Expressed in B cells and follicular helper T cells in germinal centers (at protein level).

The protein localises to the cell membrane. Functionally, g protein-coupled receptor for S-geranylgeranyl-glutathione (GGG), an endogenous metabolite present in lymphoid tissues. Couples the binding of GGG to the activation of GNA13 and downstream repression of AKT activation in lymphocytes defining their positioning and growth within lymphoid organs. In lymphoid follicles, confines B cells and follicular helper T cells in germinal centers (GCs) in response to GGG local gradients established by GGT5 (via GGG catabolism) and ABCC1 (via extracellular transport) with lower concentrations of GGG found in the follicular dendritic cell network region around which germinal centers are formed. In the bone marrow, also in response to GGG gradients established by GGT5 and ABCC1, it restricts chemotactic transmigration of B cells, T cells and NK cells from blood vessels to the bone marrow parenchyma. Contributes to GNA13-dependent pathway that suppresses GC B cell growth. This chain is S-geranylgeranyl-glutathione receptor P2RY8, found in Homo sapiens (Human).